We begin with the raw amino-acid sequence, 172 residues long: Ribosome maturation factor RimM (172 aa).

The PRC barrel domain occupies 95-168 (QEGEFYYHQI…CVDVELMEGL (74 aa)).

The protein belongs to the RimM family. As to quaternary structure, binds ribosomal protein uS19.

It localises to the cytoplasm. Its function is as follows. An accessory protein needed during the final step in the assembly of 30S ribosomal subunit, possibly for assembly of the head region. Essential for efficient processing of 16S rRNA. May be needed both before and after RbfA during the maturation of 16S rRNA. It has affinity for free ribosomal 30S subunits but not for 70S ribosomes. The sequence is that of Ribosome maturation factor RimM from Streptococcus pyogenes serotype M49 (strain NZ131).